The following is a 202-amino-acid chain: ATP-dependent Clp protease proteolytic subunit (202 aa).

Ser98 serves as the catalytic Nucleophile. The active site involves His123.

It belongs to the peptidase S14 family. Fourteen ClpP subunits assemble into 2 heptameric rings which stack back to back to give a disk-like structure with a central cavity, resembling the structure of eukaryotic proteasomes.

It is found in the cytoplasm. The catalysed reaction is Hydrolysis of proteins to small peptides in the presence of ATP and magnesium. alpha-casein is the usual test substrate. In the absence of ATP, only oligopeptides shorter than five residues are hydrolyzed (such as succinyl-Leu-Tyr-|-NHMec, and Leu-Tyr-Leu-|-Tyr-Trp, in which cleavage of the -Tyr-|-Leu- and -Tyr-|-Trp bonds also occurs).. In terms of biological role, cleaves peptides in various proteins in a process that requires ATP hydrolysis. Has a chymotrypsin-like activity. Plays a major role in the degradation of misfolded proteins. The chain is ATP-dependent Clp protease proteolytic subunit from Solidesulfovibrio magneticus (strain ATCC 700980 / DSM 13731 / RS-1) (Desulfovibrio magneticus).